The following is a 170-amino-acid chain: Transcription factor E (170 aa).

The region spanning 1-93 (MKEAYLYIVE…TWYVDDDVIR (93 aa)) is the HTH TFE/IIEalpha-type domain.

It belongs to the TFE family. Monomer. Interaction with RNA polymerase subunits RpoF and RpoE is necessary for Tfe stimulatory transcription activity. Able to interact with Tbp and RNA polymerase in the absence of DNA promoter. Interacts both with the preinitiation and elongation complexes.

Functionally, transcription factor that plays a role in the activation of archaeal genes transcribed by RNA polymerase. Facilitates transcription initiation by enhancing TATA-box recognition by TATA-box-binding protein (Tbp), and transcription factor B (Tfb) and RNA polymerase recruitment. Not absolutely required for transcription in vitro, but particularly important in cases where Tbp or Tfb function is not optimal. It dynamically alters the nucleic acid-binding properties of RNA polymerases by stabilizing the initiation complex and destabilizing elongation complexes. Seems to translocate with the RNA polymerase following initiation and acts by binding to the non template strand of the transcription bubble in elongation complexes. The polypeptide is Transcription factor E (Pyrobaculum neutrophilum (strain DSM 2338 / JCM 9278 / NBRC 100436 / V24Sta) (Thermoproteus neutrophilus)).